A 558-amino-acid chain; its full sequence is Glypican-1 (558 aa).

A signal peptide spans 1-23; sequence MELRARGWWLLCAAAALVACTRG. Cystine bridges form between Cys-32/Cys-68, Cys-62/Cys-256, Cys-69/Cys-259, Cys-191/Cys-343, Cys-246/Cys-279, Cys-268/Cys-415, and Cys-272/Cys-401. 2 N-linked (GlcNAc...) asparagine glycosylation sites follow: Asn-79 and Asn-116. The disordered stretch occupies residues 478–531; the sequence is FQDASDDGSGSGSGGGCPDDACGRRVSKKSSSSRTPLIHALPGLSEQEGQKTSA. O-linked (Xyl...) (heparan sulfate) serine glycosylation is found at Ser-486, Ser-488, and Ser-490. A lipid anchor (GPI-anchor amidated serine) is attached at Ser-530. Positions 531 to 558 are cleaved as a propeptide — removed in mature form; sequence AATRPEPHYFFLLFLFTLVLAAARPRWR.

It belongs to the glypican family. Post-translationally, S-nitrosylated in a Cu(2+)-dependent manner. Nitric acid (NO) is released from the nitrosylated cysteines by ascorbate or by some other reducing agent, in a Cu(2+) or Zn(2+) dependent manner. This free nitric oxide is then capable of cleaving the heparan sulfate side chains. N- and O-glycosylated. N-glycosylation is mainly of the complex type containing sialic acid. O-glycosylated with heparan sulfate. The heparan sulfate chains can be cleaved either by the action of heparanase or, degraded by a deaminative process that uses nitric oxide (NO) released from the S-nitrosylated cysteines. This process is triggered by ascorbate, or by some other reducing agent, in a Cu(2+)- or Zn(2+) dependent manner. Cu(2+) ions are provided by ceruloproteins such as APP, PRNP or CP which associate with GCP1 in intracellular compartments or lipid rafts. In terms of processing, this cell-associated glypican is further processed to give rise to a medium-released species. Nervous system.

It localises to the cell membrane. It is found in the endosome. The protein localises to the secreted. The protein resides in the extracellular space. Cell surface proteoglycan that bears heparan sulfate. May act as a catalyst in increasing the rate of conversion of prion protein PRPN(C) to PRNP(Sc) via associating (via the heparan sulfate side chains) with both forms of PRPN, targeting them to lipid rafts and facilitating their interaction. Required for proper skeletal muscle differentiation by sequestering FGF2 in lipid rafts preventing its binding to receptors (FGFRs) and inhibiting the FGF-mediated signaling. Binds Cu(2+) or Zn(2+) ions. Binds, via the heparan sulfate side chains, alpha-4 (V) collagen and participates in Schwann cell myelination. The chain is Glypican-1 (Gpc1) from Rattus norvegicus (Rat).